Reading from the N-terminus, the 236-residue chain is Phosphoribosylaminoimidazole-succinocarboxamide synthase (236 aa).

The protein belongs to the SAICAR synthetase family.

It carries out the reaction 5-amino-1-(5-phospho-D-ribosyl)imidazole-4-carboxylate + L-aspartate + ATP = (2S)-2-[5-amino-1-(5-phospho-beta-D-ribosyl)imidazole-4-carboxamido]succinate + ADP + phosphate + 2 H(+). The protein operates within purine metabolism; IMP biosynthesis via de novo pathway; 5-amino-1-(5-phospho-D-ribosyl)imidazole-4-carboxamide from 5-amino-1-(5-phospho-D-ribosyl)imidazole-4-carboxylate: step 1/2. This Rickettsia canadensis (strain McKiel) protein is Phosphoribosylaminoimidazole-succinocarboxamide synthase.